A 358-amino-acid polypeptide reads, in one-letter code: Protein RecA (358 aa).

69-76 lines the ATP pocket; it reads GPESSGKT.

Belongs to the RecA family.

It localises to the cytoplasm. In terms of biological role, can catalyze the hydrolysis of ATP in the presence of single-stranded DNA, the ATP-dependent uptake of single-stranded DNA by duplex DNA, and the ATP-dependent hybridization of homologous single-stranded DNAs. It interacts with LexA causing its activation and leading to its autocatalytic cleavage. This chain is Protein RecA, found in Trichormus variabilis (strain ATCC 29413 / PCC 7937) (Anabaena variabilis).